Reading from the N-terminus, the 485-residue chain is Noelin (485 aa).

The first 16 residues, 1-16 (MSVPLLKIGVVLSTMA), serve as a signal peptide directing secretion. Residues Asn-33, Asn-103, Asn-187, Asn-288, Asn-307, Asn-394, Asn-431, and Asn-473 are each glycosylated (N-linked (GlcNAc...) asparagine). The stretch at 87-225 (RDARTKQLRQ…ERLRACMQKL (139 aa)) forms a coiled coil. The 253-residue stretch at 226 to 478 (ACGKLTGISD…QILYNVTLFH (253 aa)) folds into the Olfactomedin-like domain. Cys-227 and Cys-409 are joined by a disulfide.

As to quaternary structure, homotetramer; disulfide-linked. Dimer of dimers, giving rise to a V-shaped homotretramer. Component of the AMPAR complex. In terms of processing, glycosylated.

The protein localises to the secreted. Its subcellular location is the synapse. It is found in the endoplasmic reticulum. It localises to the cell projection. The protein resides in the axon. The protein localises to the perikaryon. In terms of biological role, contributes to the regulation of axonal growth. May play an important role in regulating the production of neural crest cells by the neural tube. In Gallus gallus (Chicken), this protein is Noelin (OLFM1).